The sequence spans 720 residues: Ciliated left-right organizer metallopeptidase (720 aa).

Positions methionine 1–serine 25 are cleaved as a signal peptide. The Extracellular segment spans residues alanine 26–serine 668. Histidine 243 is a binding site for Zn(2+). Residue glutamate 244 is part of the active site. Zn(2+) contacts are provided by histidine 247 and histidine 322. A helical membrane pass occupies residues tyrosine 669 to tryptophan 689. Residues tyrosine 690–valine 720 lie on the Cytoplasmic side of the membrane.

Belongs to the peptidase M8 family. It depends on Zn(2+) as a cofactor.

The protein localises to the membrane. In terms of biological role, putative metalloprotease playing a role in the process of LR patterning. In Xenopus laevis (African clawed frog), this protein is Ciliated left-right organizer metallopeptidase (cirop).